Reading from the N-terminus, the 628-residue chain is MBT domain-containing protein 1 (628 aa).

The tract at residues 1–31 (MFDGYDSCSEDTSSSSSSEESEEEVAPLPSN) is disordered. An FCS-type zinc finger spans residues 45–80 (PDGKSGMATCEMCGMVGVRDAFYSKTKRFCSVSCSR). Residues C54, C57, C74, and C78 each coordinate Zn(2+). K115 is subject to N6-acetyllysine. MBT repeat units follow at residues 141-245 (FSWG…LVPP), 253-350 (TNWK…IGHR), 351-456 (FKRS…LTPP), and 464-560 (FKWF…LQPP). Disordered stretches follow at residues 560–590 (PASQ…HKKM) and 606–628 (NFLQ…KQEP). The span at 562–573 (SQSSRENQSASS) shows a compositional bias: low complexity. Residues 574-590 (KQKKKAKSQQYKGHKKM) show a composition bias toward basic residues. The segment covering 609–620 (QGASDQESNGSA) has biased composition (polar residues).

As to quaternary structure, monomer. Component of the NuA4 histone acetyltransferase complex. Interacts with EPC1; interaction is direct and promotes recruitment of MBTD1 into the NuA4 histone acetyltransferase complex.

It is found in the nucleus. The protein resides in the chromosome. Chromatin reader component of the NuA4 histone acetyltransferase complex, a multiprotein complex involved in transcriptional activation of select genes principally by acetylation of nucleosomal histones H4 and H2A. The NuA4 complex plays a direct role in repair of DNA double-strand breaks (DSBs) by promoting homologous recombination (HR). MBTD1 specifically recognizes and binds monomethylated and dimethylated 'Lys-20' on histone H4 (H4K20me1 and H4K20me2, respectively). In the NuA4 complex, MBTD1 promotes recruitment of the complex to H4K20me marks by competing with TP53BP1 for binding to H4K20me. Following recruitment to H4K20me at DNA breaks, the NuA4 complex catalyzes acetylation of 'Lys-15' on histone H2A (H2AK15), blocking the ubiquitination mark required for TP53BP1 localization at DNA breaks, thereby promoting homologous recombination (HR). The sequence is that of MBT domain-containing protein 1 from Homo sapiens (Human).